The chain runs to 128 residues: Ribosome-binding factor A (128 aa).

It belongs to the RbfA family. As to quaternary structure, monomer. Binds 30S ribosomal subunits, but not 50S ribosomal subunits or 70S ribosomes.

Its subcellular location is the cytoplasm. Functionally, one of several proteins that assist in the late maturation steps of the functional core of the 30S ribosomal subunit. Associates with free 30S ribosomal subunits (but not with 30S subunits that are part of 70S ribosomes or polysomes). Required for efficient processing of 16S rRNA. May interact with the 5'-terminal helix region of 16S rRNA. This Rickettsia prowazekii (strain Madrid E) protein is Ribosome-binding factor A.